The primary structure comprises 254 residues: RNA polymerase sigma factor SigI8 (254 aa).

The Polymerase core binding motif lies at 61–74 (DEYSIALIAFNEAI). Residues 209–228 (YKELTERFNLCRRTLEKNRK) constitute a DNA-binding region (H-T-H motif).

This sequence belongs to the sigma-70 factor family. SigI subfamily. In terms of assembly, interacts with RsgI8.

The protein resides in the cytoplasm. Its activity is regulated as follows. Negatively regulated by the anti-sigma-I factor RsgI8. Functionally, sigma factors are initiation factors that promote the attachment of RNA polymerase to specific initiation sites and are then released. The sequence is that of RNA polymerase sigma factor SigI8 from Acetivibrio thermocellus (strain ATCC 27405 / DSM 1237 / JCM 9322 / NBRC 103400 / NCIMB 10682 / NRRL B-4536 / VPI 7372) (Clostridium thermocellum).